A 422-amino-acid polypeptide reads, in one-letter code: MTAPRRRITLAGIIDGPGGHVAAWRHPATKADAQLDFEFHRDNARTLERGLFDAVFIADIVAVWGTRLDSLCRTSRTEHFEPLTLLAAYAAVTEHIGLCATATTTYNEPAHIAARFASLDHLSGGRAGWNVVTSAAPWESANFGFPEHLEHGKRYERAEEFIDVVKKLWDSDGRPVDHRGTHFEAPGPLGIARPPQGRPVIIQAGSSPVGREFAARHAEVIFTRHNRLSDAQDFYGDLKARVARHGRDPEKVLVWPTLAPIVAATDTEAKQRLQELQDLTHDHVALRTLQDHLGDVDLSAYPIDGPVPDIPYTNQSQSTTERLIGLARRENLSIRELALRLMGDIVVGTPEQLADHMESWFTGRGADGFNIDFPYLPGSADDFVDHVVPELQRRGLYRSGYEGTTLRANLGIDAPRKAGAAA.

Residues Asp59, Thr101, His151, Tyr155, Ser206, and Ser207 each coordinate FMN.

It belongs to the NtaA/SnaA/DszA monooxygenase family. Heterodimer of two subunits, SnaA and SnaB. Requires FMN as cofactor.

In terms of biological role, catalyzes the oxidation of the proline residue of pristinamycin IIB (PIIB) to pristinamycin IIA (PIIA). In Streptomyces pristinaespiralis, this protein is Pristinamycin IIA synthase subunit A (snaA).